We begin with the raw amino-acid sequence, 86 residues long: YcgL domain-containing protein XCV4171 (86 aa).

One can recognise a YcgL domain in the interval 1 to 83; the sequence is MHAYVYKSQR…PKTIVLAGEC (83 aa).

The protein is YcgL domain-containing protein XCV4171 of Xanthomonas euvesicatoria pv. vesicatoria (strain 85-10) (Xanthomonas campestris pv. vesicatoria).